A 256-amino-acid chain; its full sequence is Imidazole glycerol phosphate synthase subunit HisF (256 aa).

Active-site residues include Asp-12 and Asp-131.

Belongs to the HisA/HisF family. Heterodimer of HisH and HisF.

The protein localises to the cytoplasm. The catalysed reaction is 5-[(5-phospho-1-deoxy-D-ribulos-1-ylimino)methylamino]-1-(5-phospho-beta-D-ribosyl)imidazole-4-carboxamide + L-glutamine = D-erythro-1-(imidazol-4-yl)glycerol 3-phosphate + 5-amino-1-(5-phospho-beta-D-ribosyl)imidazole-4-carboxamide + L-glutamate + H(+). It participates in amino-acid biosynthesis; L-histidine biosynthesis; L-histidine from 5-phospho-alpha-D-ribose 1-diphosphate: step 5/9. Its function is as follows. IGPS catalyzes the conversion of PRFAR and glutamine to IGP, AICAR and glutamate. The HisF subunit catalyzes the cyclization activity that produces IGP and AICAR from PRFAR using the ammonia provided by the HisH subunit. This chain is Imidazole glycerol phosphate synthase subunit HisF, found in Pseudomonas putida (strain GB-1).